The chain runs to 137 residues: Large ribosomal subunit protein uL22 (137 aa).

It belongs to the universal ribosomal protein uL22 family. Part of the 50S ribosomal subunit.

Its function is as follows. This protein binds specifically to 23S rRNA; its binding is stimulated by other ribosomal proteins, e.g. L4, L17, and L20. It is important during the early stages of 50S assembly. It makes multiple contacts with different domains of the 23S rRNA in the assembled 50S subunit and ribosome. The globular domain of the protein is located near the polypeptide exit tunnel on the outside of the subunit, while an extended beta-hairpin is found that lines the wall of the exit tunnel in the center of the 70S ribosome. The polypeptide is Large ribosomal subunit protein uL22 (Flavobacterium johnsoniae (strain ATCC 17061 / DSM 2064 / JCM 8514 / BCRC 14874 / CCUG 350202 / NBRC 14942 / NCIMB 11054 / UW101) (Cytophaga johnsonae)).